A 626-amino-acid chain; its full sequence is Glucoamylase (626 aa).

The signal sequence occupies residues 1–19 (MHLVSSLLVVGAAFQAVLG). Positions 20–35 (LPDPLHEKRHSDIIKR) are excised as a propeptide. N-linked (GlcNAc...) asparagine glycosylation is present at N106. Position 155 (W155) interacts with substrate. The N-linked (GlcNAc...) asparagine glycan is linked to N206. D211 acts as the Proton acceptor in catalysis. E214 (proton donor) is an active-site residue. N217 carries an N-linked (GlcNAc...) asparagine glycan. The CBM20 domain maps to 520–626 (CAADHEVLVT…STATLDDTWR (107 aa)).

Belongs to the glycosyl hydrolase 15 family.

It catalyses the reaction Hydrolysis of terminal (1-&gt;4)-linked alpha-D-glucose residues successively from non-reducing ends of the chains with release of beta-D-glucose.. In Neurospora crassa (strain ATCC 24698 / 74-OR23-1A / CBS 708.71 / DSM 1257 / FGSC 987), this protein is Glucoamylase (gla-1).